The following is a 97-amino-acid chain: UPF0235 protein AZOSEA09540 (97 aa).

The protein belongs to the UPF0235 family.

In Aromatoleum aromaticum (strain DSM 19018 / LMG 30748 / EbN1) (Azoarcus sp. (strain EbN1)), this protein is UPF0235 protein AZOSEA09540.